The chain runs to 547 residues: ATP synthase subunit alpha (547 aa).

ATP is bound at residue 172-179 (GDRKTGKT).

The protein belongs to the ATPase alpha/beta chains family. In terms of assembly, F-type ATPases have 2 components, CF(1) - the catalytic core - and CF(0) - the membrane proton channel. CF(1) has five subunits: alpha(3), beta(3), gamma(1), delta(1), epsilon(1). CF(0) has three main subunits: a(1), b(2) and c(9-12). The alpha and beta chains form an alternating ring which encloses part of the gamma chain. CF(1) is attached to CF(0) by a central stalk formed by the gamma and epsilon chains, while a peripheral stalk is formed by the delta and b chains.

Its subcellular location is the cell membrane. It carries out the reaction ATP + H2O + 4 H(+)(in) = ADP + phosphate + 5 H(+)(out). In terms of biological role, produces ATP from ADP in the presence of a proton gradient across the membrane. The alpha chain is a regulatory subunit. The polypeptide is ATP synthase subunit alpha (Rhodococcus opacus (strain B4)).